A 2803-amino-acid chain; its full sequence is MDGVAEFSEYVSETVDVPSPFDLLEPPTSGGFLKLSKPCCYIFPGGRGDSALFAVNGFNILVDGGSDRKSCFWKLVRHLDRIDSVLLTHIGADNLPGINGLLQRKVAELEEEQSQGSSSYSDWVKNLISPELGVVFFNVPEKLRLPDASRKAKRSIEEACLTLQHLNRLGIQAEPLYRVVSNTIEPLTLFHKMGVGRLDMYVLNPVKDSKEMQFLMQKWAGNSKAKTGIVLPNGKEAEISVPYLTSITALVVWLPANPTEKIVRVLFPGNAPQNKILEGLEKLRHLDFLRYPVATQKDLASGAVPTNLKPSKIKQRADSKESLKATTKTAVSKLAKREEVVEEGAKEARSELAKELAKTEKKAKESSEKPPEKPAKPERVKTESSEALKAEKRKLIKDKVGKKHLKEKISKLEEKKDKEKKEIKKERKELKKDEGRKEEKKDAKKEEKRKDTKPELKKISKPDLKPFTPEVRKTLYKAKVPGRVKIDRSRAIRGEKELSSEPQTPPAQKGTVPLPTISGHRELVLSSPEDLTQDFEEMKREERALLAEQRDTGLGDKPFPLDTAEEGPPSTAIQGTPPSVPGLGQEEHVMKEKELVPEVPEEQGSKDRGLDSGAETEEEKDTWEEKKQREAERLPDRTEAREESEPEVKEDVIEKAELEEMEEVHPSDEEEEDATKAEGFYQKHMQEPLKVTPRSREAFGGRELGLQGKAPEKETSLFLSSLTTPAGATEHVSYIQDETIPGYSETEQTISDEEIHDEPEERPAPPRFHTSTYDLPGPEGAGPFEASQPADSAVPATSGKVYGTPETELTYPTNIVAAPLAEEEHVSSATSITECDKLSSFATSVAEDQSVASLTAPQTEETGKSSLLLDTVTSIPSSRTEATQGLDYVPSAGTISPTSSLEEDKGFKSPPCEDFSVTGESEKRGEIIGKGLSGERAVEEEEEETANVEMSEKLCSQYGTPVFSAPGHALHPGEPALGEAEERCLSPDDSTVKMASPPPSGPPSATHTPFHQSPVEEKSEPQDFQEADSWGDTKRTPGVGKEDAAEETVKPGPEEGTLEKEEKVPPPRSPQAQEAPVNIDEGLTGCTIQLLPAQDKAIVFEIMEAGEPTGPILGAEALPGGLRTLPQEPGKPQKDEVLRYPDRSLSPEDAESLSVLSVPSPDTANQEPTPKSPCGLTEQYLHKDRWPEVSPEDTQSLSLSEESPSKETSLDVSSKQLSPESLGTLQFGELNLGKEEMGHLMQAEDTSHHTAPMSVPEPHAATASPPTDGTTRYSAQTDITDDSLDRKSPASSFSHSTPSGNGKYLPGAITSPDEHILTPDSSFSKSPESLPGPALEDIAIKWEDKVPGLKDRTSEQKKEPEPKDEVLQQKDKTLEHKEVVEPKDTAIYQKDEALHVKNEAVKQQDKALEQKGRDLEQKDTALEQKDKALEPKDKDLEEKDKALEQKDKIPEEKDKALEQKDTALEQKDKALEPKDKDLEQKDRVLEQKEKIPEEKDKALDQKVRSVEHKAPEDTVAEMKDRDLEQTDKAPEQKHQAQEQKDKVSEKKDQALEQKYWALGQKDEALEQNIQALEENHQTQEQESLVQEDKTRKPKMLEEKSPEKVKAMEEKLEALLEKTKALGLEESLVQEGRAREQEEKYWRGQDVVQEWQETSPTREEPAGEQKELAPAWEDTSPEQDNRYWRGREDVALEQDTYWRELSCERKVWFPHELDGQGARPHYTEERESTFLDEGPDDEQEVPLREHATRSPWASDFKDFQESSPQKGLEVERWLAESPVGLPPEEEDKLTRSPFEIISPPASPPEMVGQRVPSAPGQESPIPDPKLMPHMKNEPTTPSWLADIPPWVPKDRPLPPAPLSPAPGPPTPAPESHTPAPFSWGTAEYDSVVAAVQEGAAELEGGPYSPLGKDYRKAEGEREEEGRAEAPDKSSHSSKVPEASKSHATTEPEQTEPEQREPTPYPDERSFQYADIYEQMMLTGLGPACPTREPPLGAAGDWPPCLSTKEAAAGRNTSAEKELSSPISPKSLQSDTPTFSYAALAGPTVPPRPEPGPSMEPSLTPPAVPPRAPILSKGPSPPLNGNILSCSPDRRSPSPKESGRSHWDDSTSDSELEKGAREQPEKEAQSPSPPHPIPMGSPTLWPETEAHVSPPLDSHLGPARPSLDFPASAFGFSSLQPAPPQLPSPAEPRSAPCGSLAFSGDRALALAPGPPTRTRHDEYLEVTKAPSLDSSLPQLPSPSSPGAPLLSNLPRPASPALSEGSSSEATTPVISSVAERFSPSLEAAEQESGELDPGMEPAAHSLWDLTPLSPAPPASLDLALAPAPSLPGDMGDGILPCHLECSEAATEKPSPFQVPSEDCAANGPTETSPNPPGPAPAKAENEEAAACPAWERGAWPEGAERSSRPDTLLSPEQPVCPAGGSGGPPSSASPEVEAGPQGCATEPRPHRGELSPSFLNPPLPPSIDDRDLSTEEVRLVGRGGRRRVGGPGTTGGPCPVTDETPPTSASDSGSSQSDSDVPPETEECPSITAEAALDSDEDGDFLPVDKAGGVSGTHHPRPGHDPPPLPQPDPRPSPPRPDVCMADPEGLSSESGRVERLREKEKVQGRVGRRAPGKAKPASPARRLDLRGKRSPTPGKGPADRASRAPPRPRSTTSQVTPAEEKDGHSPMSKGLVNGLKAGPMALSSKGSSGAPVYVDLAYIPNHCSGKTADLDFFRRVRASYYVVSGNDPANGEPSRAVLDALLEGKAQWGENLQVTLIPTHDTEVTREWYQQTHEQQQQLNVLVLASSSTVVMQDESFPACKIEF.

5 positions are modified to phosphoserine: serine 114, serine 117, serine 118, serine 121, and serine 155. Tyrosine 177 carries the post-translational modification Phosphotyrosine. 2 disordered regions span residues 302 to 466 and 486 to 516; these read GAVP…DLKP and IDRS…PLPT. A phosphoserine mark is found at serine 319, serine 322, and serine 384. Positions 335–390 are enriched in basic and acidic residues; that stretch reads AKREEVVEEGAKEARSELAKELAKTEKKAKESSEKPPEKPAKPERVKTESSEALKA. The span at 391–406 shows a compositional bias: basic residues; sequence EKRKLIKDKVGKKHLK. 2 stretches are compositionally biased toward basic and acidic residues: residues 407-464 and 486-499; these read EKIS…KPDL and IDRS…KELS. 8 tandem repeats follow at residues 415–417, 420–422, 427–429, 431–433, 436–438, 440–442, 444–446, and 449–451. Residues 415–541 form a 9 X 3 AA repeats of K-K-[DE] region; it reads KKDKEKKEIK…TQDFEEMKRE (127 aa). Threonine 504 carries the phosphothreonine modification. A phosphoserine mark is found at serine 526 and serine 527. The stretch at 539 to 541 is repeat 9; sequence KRE. 2 stretches are compositionally biased toward basic and acidic residues: residues 539 to 554 and 585 to 596; these read KREE…DTGL and QEEHVMKEKELV. 5 disordered regions span residues 539-712, 734-806, 847-1080, 1109-1548, and 1573-1605; these read KREE…KAPE, YIQD…GTPE, EDQS…VNID, TGPI…EKKD, and EENH…EKVK. A phosphoserine mark is found at serine 605 and serine 612. Threonine 616 carries the post-translational modification Phosphothreonine. The span at 623-667 shows a compositional bias: basic and acidic residues; the sequence is WEEKKQREAERLPDRTEAREESEPEVKEDVIEKAELEEMEEVHPS. Phosphoserine is present on residues serine 644, serine 667, and serine 787. Polar residues-rich tracts occupy residues 847-860 and 871-883; these read EDQS…PQTE and TVTS…TEAT. 4 positions are modified to phosphoserine: serine 874, serine 877, serine 878, and serine 891. The residue at position 894 (threonine 894) is a Phosphothreonine. Serine 896, serine 900, serine 909, serine 986, serine 996, serine 1004, serine 1013, serine 1019, and serine 1029 each carry phosphoserine. Basic and acidic residues predominate over residues 1031–1065; sequence GDTKRTPGVGKEDAAEETVKPGPEEGTLEKEEKVP. Phosphoserine occurs at positions 1069, 1144, 1146, 1160, 1172, 1190, 1200, 1203, 1209, 1218, 1221, and 1264. Positions 1131–1146 are enriched in basic and acidic residues; it reads KPQKDEVLRYPDRSLS. Positions 1154 to 1169 are enriched in polar residues; the sequence is SVLSVPSPDTANQEPT. Polar residues-rich tracts occupy residues 1211–1224 and 1264–1278; these read DVSS…SLGT and SPPT…AQTD. Positions 1289-1299 are enriched in low complexity; sequence PASSFSHSTPS. Phosphoserine is present on residues serine 1326, serine 1329, serine 1544, serine 1600, and serine 1626. Basic and acidic residues-rich tracts occupy residues 1338–1548 and 1586–1605; these read IAIK…EKKD and QEDK…EKVK. Basic and acidic residues predominate over residues 1632-1642; that stretch reads RAREQEEKYWR. 3 disordered regions span residues 1632-1684, 1713-1879, and 1892-2673; these read RARE…RYWR, DGQG…FSWG, and EGAA…LVNG. Serine 1654 carries the post-translational modification Phosphoserine. Positions 1655–1666 are enriched in basic and acidic residues; it reads PTREEPAGEQKE. A phosphoserine mark is found at serine 1675, serine 1749, serine 1762, serine 1776, serine 1791, serine 1797, serine 1801, serine 1812, and serine 1818. Residues 1852–1867 show a composition bias toward pro residues; that stretch reads LPPAPLSPAPGPPTPA. Positions 1907–1929 are enriched in basic and acidic residues; it reads KDYRKAEGEREEEGRAEAPDKSS. Position 1931 is a phosphoserine (serine 1931). Residues 1951 to 1964 show a composition bias toward basic and acidic residues; it reads PEQREPTPYPDERS. Threonine 1957 bears the Phosphothreonine mark. Over residues 2019–2033 the composition is skewed to polar residues; sequence SPISPKSLQSDTPTF. Phosphoserine is present on serine 2022. Pro residues predominate over residues 2042–2066; it reads TVPPRPEPGPSMEPSLTPPAVPPRA. Position 2058 is a phosphothreonine (threonine 2058). Serine 2074, serine 2104, serine 2106, and serine 2108 each carry phosphoserine. Residues 2086-2122 are compositionally biased toward basic and acidic residues; sequence PDRRSPSPKESGRSHWDDSTSDSELEKGAREQPEKEA. Pro residues predominate over residues 2175-2184; the sequence is PAPPQLPSPA. Phosphoserine occurs at positions 2235, 2252, 2256, 2259, and 2260. Polar residues predominate over residues 2257–2268; the sequence is EGSSSEATTPVI. The segment covering 2312 to 2325 has biased composition (low complexity); sequence ASLDLALAPAPSLP. Serine 2449 carries the phosphoserine modification. The segment covering 2461 to 2473 has biased composition (basic and acidic residues); it reads IDDRDLSTEEVRL. Positions 2502-2514 are enriched in low complexity; that stretch reads SASDSGSSQSDSD. Positions 2559–2575 are enriched in pro residues; the sequence is DPPPLPQPDPRPSPPRP. A compositionally biased stretch (basic and acidic residues) spans 2590–2602; it reads GRVERLREKEKVQ. Phosphoserine occurs at positions 2649 and 2664.

The protein belongs to the MAP1 family. As to quaternary structure, 3 different light chains, LC1 (a cleavage product of MAP1B), LC2 (a cleavage product of MAP1A) and LC3 (produced by one of the MAP1LC3 genes), can associate with the MAP1A or MAP1B heavy chains. Interacts with TIAM2. Interacts with guanylate kinase-like domain of DLG1, DLG2 and DLG4. Binds to CSNK1D. Interacts with ELAVL4. Post-translationally, phosphorylated by CSNK1D. In terms of processing, LC2 is generated from MAP1A by proteolytic processing. In terms of tissue distribution, brain.

The protein localises to the cytoplasm. It localises to the cytoskeleton. Its function is as follows. Structural protein involved in the filamentous cross-bridging between microtubules and other skeletal elements. In Homo sapiens (Human), this protein is Microtubule-associated protein 1A (MAP1A).